We begin with the raw amino-acid sequence, 429 residues long: Serum response factor-binding protein 1 (429 aa).

The residue at position 2 (alanine 2) is an N-acetylalanine. 2 coiled-coil regions span residues 42–67 (KGTE…AMKE) and 108–144 (LLKK…EDNH). 2 stretches are compositionally biased toward polar residues: residues 128–138 (QNVTEVESSKN) and 146–160 (KNTL…NLQR). Disordered stretches follow at residues 128–285 (QNVT…GDDF) and 311–429 (EKVF…TFDD). Basic and acidic residues predominate over residues 183–195 (NSKEKIAKMEHGP). Lysine 190 participates in a covalent cross-link: Glycyl lysine isopeptide (Lys-Gly) (interchain with G-Cter in SUMO2). Serine 203, serine 205, serine 264, serine 279, and serine 281 each carry phosphoserine. A compositionally biased stretch (acidic residues) spans 249–265 (GGEELCEEEKEYFDDST). The span at 311 to 341 (EKVFLKEDTGETHGDTRNDKTKPSTETRKLE) shows a compositional bias: basic and acidic residues. A Glycyl lysine isopeptide (Lys-Gly) (interchain with G-Cter in SUMO2) cross-link involves residue lysine 316. Serine 349, serine 351, and serine 367 each carry phosphoserine. Residues 357–367 (NFKEQAPKTRS) are compositionally biased toward basic and acidic residues. A compositionally biased stretch (polar residues) spans 373 to 383 (NEPQFKNQFNK).

As to quaternary structure, interacts with SRF. Forms complexes with SRF and SRF cofactors ARID2, MYOCD and NKX2-5. Interacts with the N-terminus of SLC2A4.

The protein localises to the cytoplasm. The protein resides in the perinuclear region. May be involved in regulating transcriptional activation of cardiac genes during the aging process. May play a role in biosynthesis and/or processing of SLC2A4 in adipose cells. The chain is Serum response factor-binding protein 1 from Pongo abelii (Sumatran orangutan).